Consider the following 62-residue polypeptide: Small ribosomal subunit protein eS27 (62 aa).

Zn(2+) contacts are provided by C17, C20, C36, and C39. The C4-type zinc-finger motif lies at 17-39 (CNDCENEQIIFGSASRKITCVVC).

The protein belongs to the eukaryotic ribosomal protein eS27 family. As to quaternary structure, part of the 30S ribosomal subunit. The cofactor is Zn(2+).

In Methanosarcina barkeri (strain Fusaro / DSM 804), this protein is Small ribosomal subunit protein eS27.